A 447-amino-acid polypeptide reads, in one-letter code: Argininosuccinate synthase (447 aa).

Residues 17–25 and A43 each bind ATP; that span reads AFSGGLDTS. Y99 contributes to the L-citrulline binding site. Positions 129 and 131 each coordinate ATP. 3 residues coordinate L-aspartate: T131, N135, and D136. Position 135 (N135) interacts with L-citrulline. ATP is bound at residue D136. 2 residues coordinate L-citrulline: R139 and S192. ATP is bound at residue D194. Residues T201, E203, and E280 each coordinate L-citrulline.

The protein belongs to the argininosuccinate synthase family. Type 2 subfamily. As to quaternary structure, homotetramer.

The protein resides in the cytoplasm. It catalyses the reaction L-citrulline + L-aspartate + ATP = 2-(N(omega)-L-arginino)succinate + AMP + diphosphate + H(+). It participates in amino-acid biosynthesis; L-arginine biosynthesis; L-arginine from L-ornithine and carbamoyl phosphate: step 2/3. This chain is Argininosuccinate synthase (argG), found in Salmonella typhi.